Here is an 894-residue protein sequence, read N- to C-terminus: Protein SEY1 (894 aa).

The tract at residues 1–64 (MGLDVDSVPI…PRALEPAQVT (64 aa)) is disordered. Over 1 to 768 (MGLDVDSVPI…KRGTVSSMSQ (768 aa)) the chain is Cytoplasmic. Positions 9–24 (PIAEAAAPSSMAATEP) are enriched in low complexity. The segment covering 40 to 53 (APMNTDSSRETMPT) has biased composition (polar residues). In terms of domain architecture, GB1/RHD3-type G spans 137–359 (GFGYDICAVL…DESYVFKTEY (223 aa)). 147 to 154 (GSQSTGKS) is a GTP binding site. Residues 536–559 (KVDDERAQLLDELHTLARTLRANE) are a coiled coil. Residues 769-789 (VPIWMYGVLVVLGWNEAMAVL) traverse the membrane as a helical segment. Topologically, residues 790–792 (RNP) are lumenal. Residues 793–813 (VYFTLLCMVLATAYVIWRLNL) form a helical membrane-spanning segment. The Cytoplasmic segment spans residues 814 to 894 (GTPVLALASG…DSHPRLPASF (81 aa)). Residues 841-894 (DGTPPSANRAREYRVPSGSTAHVSEKTPHRPLTTSGAAEADTVEDSHPRLPASF) form a disordered region.

This sequence belongs to the TRAFAC class dynamin-like GTPase superfamily. GB1/RHD3 GTPase family. RHD3 subfamily.

The protein localises to the endoplasmic reticulum membrane. Functionally, cooperates with the reticulon proteins and tubule-shaping DP1 family proteins to generate and maintain the structure of the tubular endoplasmic reticulum network. Has GTPase activity, which is required for its function in ER organization. This Malassezia globosa (strain ATCC MYA-4612 / CBS 7966) (Dandruff-associated fungus) protein is Protein SEY1.